Consider the following 1083-residue polypeptide: Regulator of the glycerol channel 1 (1083 aa).

Disordered regions lie at residues 1-46 (MSDY…GSSD) and 69-89 (LKNE…KENK). The span at 13-31 (GGISKQPATPGSTRSSSRN) shows a compositional bias: polar residues. 5 positions are modified to phosphoserine: Ser-136, Ser-249, Ser-252, Ser-481, and Ser-537. Residues 495–606 (CIRVGYLLKK…DCSLKDSTDS (112 aa)) enclose the PH domain. A disordered region spans residues 534 to 582 (DSKSPRSKNKPVVEQSDISRVNKDGTNAGSHPSSKGTQDPKLTKRRKGL). The segment covering 549 to 570 (SDISRVNKDGTNAGSHPSSKGT) has biased composition (polar residues). Ser-652, Ser-765, and Ser-813 each carry phosphoserine. Residues Thr-817 and Thr-857 each carry the phosphothreonine modification. Phosphoserine is present on residues Ser-866, Ser-879, Ser-918, Ser-966, Ser-969, and Ser-975. The tract at residues 979–1083 (EENRTQNCSG…TVPATSASSK (105 aa)) is disordered. 3 stretches are compositionally biased toward polar residues: residues 983 to 992 (TQNCSGSRKS), 1043 to 1061 (LKKT…VSND), and 1071 to 1083 (STNT…ASSK). Phosphoserine occurs at positions 1059, 1081, and 1082.

This sequence belongs to the RGC1 family.

Its subcellular location is the cytoplasm. Positive regulator of FPS1 glycerol channel required for the glycerol efflux. The sequence is that of Regulator of the glycerol channel 1 (RGC1) from Saccharomyces cerevisiae (strain ATCC 204508 / S288c) (Baker's yeast).